The sequence spans 114 residues: Nascent polypeptide-associated complex protein (114 aa).

The region spanning 5–69 is the NAC-A/B domain; the sequence is PSQFKNLERM…AKEAQKEEPK (65 aa).

The protein belongs to the NAC-alpha family. As to quaternary structure, homodimer. Interacts with the ribosome. Binds ribosomal RNA.

Its function is as follows. Contacts the emerging nascent chain on the ribosome. This Sulfurisphaera tokodaii (strain DSM 16993 / JCM 10545 / NBRC 100140 / 7) (Sulfolobus tokodaii) protein is Nascent polypeptide-associated complex protein.